An 815-amino-acid chain; its full sequence is Protein SEY1 homolog (815 aa).

Residues 1-737 lie on the Cytoplasmic side of the membrane; that stretch reads MRQIIDYDCN…IQSTGRQPQN (737 aa). Residues 28-260 enclose the GB1/RHD3-type G domain; the sequence is TLGFNVISIL…LPKDYTRRIP (233 aa). 38-45 serves as a coordination point for GTP; it reads GCQSTGKS. Positions 298 to 321 form a coiled coil; the sequence is AKDDILDGYKKSIKDLQKKMEKRE. The chain crosses the membrane as a helical span at residues 738-758; the sequence is IPWWIYLLIIILGFDEITYVL. Over 759–761 the chain is Lumenal; it reads TSP. Residues 762-782 form a helical membrane-spanning segment; sequence VLVTLLLLLASFIYSYLTGNF. Residues 783–815 are Cytoplasmic-facing; it reads SSFCNYSQQFVIISTKILHYISGAIHSSLDNRK.

Belongs to the TRAFAC class dynamin-like GTPase superfamily. GB1/RHD3 GTPase family. RHD3 subfamily.

The protein localises to the endoplasmic reticulum membrane. Probable GTP-binding protein that may be involved in cell development. The sequence is that of Protein SEY1 homolog from Cryptosporidium hominis.